A 522-amino-acid polypeptide reads, in one-letter code: Gypsy retrotransposon integrase-like protein 1 (522 aa).

The region spanning 135–292 (KVENPWSLVT…TPYFQMFSRN (158 aa)) is the Integrase catalytic domain. Position 502 is a phosphoserine (Ser-502).

The sequence is that of Gypsy retrotransposon integrase-like protein 1 (GIN1) from Pongo abelii (Sumatran orangutan).